The chain runs to 438 residues: Thymidine phosphorylase (438 aa).

This sequence belongs to the thymidine/pyrimidine-nucleoside phosphorylase family. In terms of assembly, homodimer.

It catalyses the reaction thymidine + phosphate = 2-deoxy-alpha-D-ribose 1-phosphate + thymine. The protein operates within pyrimidine metabolism; dTMP biosynthesis via salvage pathway; dTMP from thymine: step 1/2. The enzymes which catalyze the reversible phosphorolysis of pyrimidine nucleosides are involved in the degradation of these compounds and in their utilization as carbon and energy sources, or in the rescue of pyrimidine bases for nucleotide synthesis. The protein is Thymidine phosphorylase of Burkholderia cenocepacia (strain ATCC BAA-245 / DSM 16553 / LMG 16656 / NCTC 13227 / J2315 / CF5610) (Burkholderia cepacia (strain J2315)).